The chain runs to 74 residues: Ferredoxin MycCII (74 aa).

The 4Fe-4S ferredoxin-type domain maps to 1 to 29; the sequence is MRIVLDAERCVGAGQCEATAPELFTQGDD. The [3Fe-4S] cluster site is built by Cys-10, Cys-16, and Cys-54.

The cofactor is [3Fe-4S] cluster.

It participates in antibiotic biosynthesis; mycinamicin biosynthesis. Specific electron transport protein capable of effectively supporting cytochrome P450 MycCI activity in the biosynthesis of mycinamicin, a 16-membered macrolide antibiotic. The chain is Ferredoxin MycCII from Micromonospora griseorubida.